A 59-amino-acid chain; its full sequence is Conotoxin ViVA (59 aa).

A signal peptide spans 1-19 (MRCVPVFIILLLLIPSASS). Positions 20–46 (AAVQPKTEKDDVPLASVHDSALRILSR) are excised as a propeptide. Gln-47 is modified (pyrrolidone carboxylic acid). 2 disulfide bridges follow: Cys-48–Cys-55 and Cys-49–Cys-56. Isoleucine amide is present on Ile-58.

This sequence belongs to the conotoxin T superfamily. In terms of tissue distribution, expressed by the venom duct.

The protein localises to the secreted. This is Conotoxin ViVA from Conus virgo (Virgin cone).